We begin with the raw amino-acid sequence, 260 residues long: Phosphate import ATP-binding protein PstB 1 (260 aa).

The ABC transporter domain occupies 13–255 (ISARDLNVHY…PQHPLTQGYI (243 aa)). Residue 45-52 (GPSGCGKS) coordinates ATP.

The protein belongs to the ABC transporter superfamily. Phosphate importer (TC 3.A.1.7) family. The complex is composed of two ATP-binding proteins (PstB), two transmembrane proteins (PstC and PstA) and a solute-binding protein (PstS).

Its subcellular location is the cell inner membrane. The catalysed reaction is phosphate(out) + ATP + H2O = ADP + 2 phosphate(in) + H(+). Part of the ABC transporter complex PstSACB involved in phosphate import. Responsible for energy coupling to the transport system. This is Phosphate import ATP-binding protein PstB 1 from Paramagnetospirillum magneticum (strain ATCC 700264 / AMB-1) (Magnetospirillum magneticum).